The chain runs to 419 residues: UDP-N-acetylglucosamine 1-carboxyvinyltransferase (419 aa).

Residue Lys-22 to Asn-23 participates in phosphoenolpyruvate binding. UDP-N-acetyl-alpha-D-glucosamine is bound at residue Arg-92. Catalysis depends on Cys-116, which acts as the Proton donor. At Cys-116 the chain carries 2-(S-cysteinyl)pyruvic acid O-phosphothioketal. UDP-N-acetyl-alpha-D-glucosamine-binding positions include Arg-121–Leu-125, Asp-307, and Leu-329.

It belongs to the EPSP synthase family. MurA subfamily.

The protein resides in the cytoplasm. The enzyme catalyses phosphoenolpyruvate + UDP-N-acetyl-alpha-D-glucosamine = UDP-N-acetyl-3-O-(1-carboxyvinyl)-alpha-D-glucosamine + phosphate. The protein operates within cell wall biogenesis; peptidoglycan biosynthesis. Its function is as follows. Cell wall formation. Adds enolpyruvyl to UDP-N-acetylglucosamine. The protein is UDP-N-acetylglucosamine 1-carboxyvinyltransferase of Campylobacter fetus subsp. fetus (strain 82-40).